A 119-amino-acid chain; its full sequence is Ribonuclease P protein component (119 aa).

This sequence belongs to the RnpA family. Consists of a catalytic RNA component (M1 or rnpB) and a protein subunit.

The catalysed reaction is Endonucleolytic cleavage of RNA, removing 5'-extranucleotides from tRNA precursor.. RNaseP catalyzes the removal of the 5'-leader sequence from pre-tRNA to produce the mature 5'-terminus. It can also cleave other RNA substrates such as 4.5S RNA. The protein component plays an auxiliary but essential role in vivo by binding to the 5'-leader sequence and broadening the substrate specificity of the ribozyme. The protein is Ribonuclease P protein component of Streptococcus pyogenes serotype M1.